The following is a 158-amino-acid chain: Regulator of sigma D (158 aa).

Belongs to the Rsd/AlgQ family. As to quaternary structure, interacts with RpoD.

The protein localises to the cytoplasm. In terms of biological role, binds RpoD and negatively regulates RpoD-mediated transcription activation by preventing the interaction between the primary sigma factor RpoD with the catalytic core of the RNA polymerase and with promoter DNA. May be involved in replacement of the RNA polymerase sigma subunit from RpoD to RpoS during the transition from exponential growth to the stationary phase. In Escherichia coli O6:H1 (strain CFT073 / ATCC 700928 / UPEC), this protein is Regulator of sigma D.